The following is a 347-amino-acid chain: Heat-inducible transcription repressor HrcA (347 aa).

The protein belongs to the HrcA family.

Negative regulator of class I heat shock genes (grpE-dnaK-dnaJ and groELS operons). Prevents heat-shock induction of these operons. This Lactiplantibacillus plantarum (strain ATCC BAA-793 / NCIMB 8826 / WCFS1) (Lactobacillus plantarum) protein is Heat-inducible transcription repressor HrcA.